A 417-amino-acid polypeptide reads, in one-letter code: Transmembrane protease serine 11G (417 aa).

Over 1–22 (MYQPGILGRRKRVCKPWTVALT) the chain is Cytoplasmic. The chain crosses the membrane as a helical; Signal-anchor for type II membrane protein span at residues 23-43 (TTAALLALAVLIGLLVYFLVY). Residues 44-417 (EEKTHYYQAS…RNWIKSKTNI (374 aa)) are Extracellular-facing. In terms of domain architecture, SEA spans 46-165 (KTHYYQASFW…PYLREMNAAQ (120 aa)). The 231-residue stretch at 186–416 (IADGKPAGSN…YRNWIKSKTN (231 aa)) folds into the Peptidase S1 domain. A disulfide bond links Cys-211 and Cys-227. Active-site charge relay system residues include His-226 and Asp-271. Disulfide bonds link Cys-336–Cys-352 and Cys-363–Cys-392. Ser-367 acts as the Charge relay system in catalysis.

It belongs to the peptidase S1 family. In terms of tissue distribution, highest expression in lung and tongue. Also expressed in brain, colon, heart and liver. Isoform 1 is the predominant form in tongue whereas both isoforms are expressed in similar amounts in lung. At the cellular level, expression is confined to epithelial cells within the cleft of the circumvallate papillae extending into the ducts of the minor salivary glands, the respiratory epithelium of the nasal cavity and tear gland ducts.

The protein resides in the membrane. This is Transmembrane protease serine 11G (Tmprss11g) from Rattus norvegicus (Rat).